A 278-amino-acid polypeptide reads, in one-letter code: tRNA(Phe) (4-demethylwyosine(37)-C(7)) aminocarboxypropyltransferase (278 aa).

S-adenosyl-L-methionine-binding positions include S109, R116, E155, and 183–184 (DN).

The protein belongs to the class I-like SAM-binding methyltransferase superfamily. TRM5/TYW2 family.

The protein localises to the cytoplasm. The catalysed reaction is 4-demethylwyosine(37) in tRNA(Phe) + S-adenosyl-L-methionine = 4-demethyl-7-[(3S)-3-amino-3-carboxypropyl]wyosine(37) in tRNA(Phe) + S-methyl-5'-thioadenosine + H(+). S-adenosyl-L-methionine-dependent transferase that acts as a component of the wyosine derivatives biosynthesis pathway. Catalyzes the transfer of the alpha-amino-alpha-carboxypropyl (acp) group from S-adenosyl-L-methionine to 4-demethylwyosine (imG-14), forming 7-aminocarboxypropyl-demethylwyosine (wybutosine-86) at position 37 of tRNA(Phe). The chain is tRNA(Phe) (4-demethylwyosine(37)-C(7)) aminocarboxypropyltransferase from Pyrococcus horikoshii (strain ATCC 700860 / DSM 12428 / JCM 9974 / NBRC 100139 / OT-3).